A 475-amino-acid polypeptide reads, in one-letter code: E3 ubiquitin-protein ligase TRIM62 (475 aa).

Residues 11 to 54 form an RING-type zinc finger; it reads CSICLSIYQDPVSLGCEHYFCRRCITEHWVRQEAQGARDCPECR. Residues 88–128 form a B box-type zinc finger; it reads RAARPCQAHDKVKLFCLTDRALLCFFCDEPALHEQHQVTGI. Cys93, His96, Cys114, and His120 together coordinate Zn(2+). Residues 121 to 241 adopt a coiled-coil conformation; it reads EQHQVTGIDD…LQERLAETDR (121 aa). Residues 277-475 form the B30.2/SPRY domain; the sequence is PLQYTIWKSL…QPLRINTVRI (199 aa).

The protein belongs to the TRIM/RBCC family. In terms of assembly, interacts with the ubiquitin-conjugating enzyme, UBE2D2. Post-translationally, polyubiquitinated, autoubiquitinated in the presence of UBE2D2.

The protein localises to the cytoplasm. The catalysed reaction is S-ubiquitinyl-[E2 ubiquitin-conjugating enzyme]-L-cysteine + [acceptor protein]-L-lysine = [E2 ubiquitin-conjugating enzyme]-L-cysteine + N(6)-ubiquitinyl-[acceptor protein]-L-lysine.. It participates in protein modification; protein ubiquitination. Functionally, E3 ubiquitin ligase that plays a role in antifungal immunity by mediating 'Lys-27'-linked ubiquitination of CARD9 downstream of C-type lectin receptors; leading to CARD9 activation, followed by activation of NF-kappa-B and MAP kinase p38 pathways. E3 ubiquitin ligase activity is dependent on E2 ubiquitin-conjugating enzyme UBE2D2. This is E3 ubiquitin-protein ligase TRIM62 from Mus musculus (Mouse).